Here is a 253-residue protein sequence, read N- to C-terminus: Phosphate import ATP-binding protein PstB (253 aa).

The ABC transporter domain maps to 7 to 249 (ASAKNLNLWY…PQSSKTKRYI (243 aa)). 39–46 (GPSGCGKS) is an ATP binding site.

The protein belongs to the ABC transporter superfamily. Phosphate importer (TC 3.A.1.7) family. In terms of assembly, the complex is composed of two ATP-binding proteins (PstB), two transmembrane proteins (PstC and PstA) and a solute-binding protein (PstS).

The protein resides in the cell inner membrane. It catalyses the reaction phosphate(out) + ATP + H2O = ADP + 2 phosphate(in) + H(+). Part of the ABC transporter complex PstSACB involved in phosphate import. Responsible for energy coupling to the transport system. In Ehrlichia ruminantium (strain Gardel), this protein is Phosphate import ATP-binding protein PstB.